A 486-amino-acid chain; its full sequence is Transcription factor bHLH49 (486 aa).

The segment covering 1 to 17 has biased composition (basic and acidic residues); the sequence is MDLSAKDEFSAEKRNPD. Disordered regions lie at residues 1–30 and 194–300; these read MDLSAKDEFSAEKRNPDNYDSVNNPSGDWR and KEST…KDGY. Composition is skewed to polar residues over residues 198-221 and 243-254; these read VRSSEQAKPNVPGSGNVSEDTQSS and QKNSEAAQSHRS. The segment covering 273–293 has biased composition (low complexity); sequence QSPNSPGKKSNSGKQQGKQSS. Residues 309 to 359 form the bHLH domain; that stretch reads QATNSHSLAERVRREKISERMKFLQDLVPGCNKVTGKAVMLDEIINYVQSL.

In terms of assembly, homodimer. Interacts with IBH1. As to expression, expressed constitutively in roots, stems, and flowers.

It localises to the nucleus. Transcriptional activator involved in cell elongation. Regulates the expression of a subset of genes involved in cell expansion by binding to the G-box motif. This chain is Transcription factor bHLH49 (BHLH49), found in Arabidopsis thaliana (Mouse-ear cress).